Here is a 483-residue protein sequence, read N- to C-terminus: Zinc finger CCCH domain-containing protein 25 (483 aa).

A C3H1-type zinc finger spans residues 157–184; the sequence is RNRAHICSFFIRGECTRGDECPYRHEMP. An RRM domain is found at 228 to 301; it reads RTLYVGGLNS…QRLKLTWGRP (74 aa). Disordered regions lie at residues 298-317 and 336-483; these read WGRP…QGSV and PPML…GSSQ. Residues 336–351 are compositionally biased toward pro residues; sequence PPMLQYYMHPPPPQPP. Low complexity predominate over residues 370-380; sequence SSSKESGSSTS. The span at 381-391 shows a compositional bias: polar residues; the sequence is DNRGASSSSYT. 2 stretches are compositionally biased toward low complexity: residues 392-401 and 409-423; these read MPPHGHYPQH and YGGY…YPPY. Residues 438–459 are compositionally biased toward pro residues; sequence QPGPGSRPNPPHPSSVSAPPPD. The segment covering 460-476 has biased composition (low complexity); that stretch reads SVSAAPSGSSQQSADAA.

The sequence is that of Zinc finger CCCH domain-containing protein 25 from Arabidopsis thaliana (Mouse-ear cress).